Reading from the N-terminus, the 143-residue chain is Root meristem growth factor 10 (143 aa).

The first 27 residues, Met1–Ser27, serve as a signal peptide directing secretion. Residues Arg28–Leu130 constitute a propeptide that is removed on maturation. Asn60 is a glycosylation site (N-linked (GlcNAc...) asparagine). The segment covering Asn74 to Gly83 has biased composition (polar residues). The interval Asn74–Asn143 is disordered. Residues Val92–Lys99 carry the Nuclear localization signal motif. Tyr132 bears the Sulfotyrosine mark. Pro140 bears the Hydroxyproline mark.

Belongs to the RGF family. Binds to LRR receptor-like serine/threonine-protein kinases RGI1, RGI2 and RGI3 to trigger their dimerization with SERK proteins and subsequent signaling. Post-translationally, the tyrosine sulfation is critical for the function of the peptide. As to expression, expressed in root tips.

The protein localises to the secreted. It is found in the nucleus. Functionally, maintains the postembryonic root stem cell niche by regulating the expression levels and patterns of the transcription factor PLETHORA (PLT), mainly at the post-transcriptional level. Promotes root elongation. The polypeptide is Root meristem growth factor 10 (Arabidopsis thaliana (Mouse-ear cress)).